We begin with the raw amino-acid sequence, 169 residues long: Probable prefoldin subunit 3 (169 aa).

It belongs to the prefoldin subunit alpha family. As to quaternary structure, heterohexamer of two PFD-alpha type and four PFD-beta type subunits.

Its function is as follows. Binds specifically to cytosolic chaperonin (c-CPN) and transfers target proteins to it. Binds to nascent polypeptide chain and promotes folding in an environment in which there are many competing pathways for nonnative proteins. The polypeptide is Probable prefoldin subunit 3 (Schizosaccharomyces pombe (strain 972 / ATCC 24843) (Fission yeast)).